We begin with the raw amino-acid sequence, 392 residues long: Olfactomedin-like protein 3 (392 aa).

The signal sequence occupies residues 1-21 (MGPWRCLLLLPLLAAAPRAQQ). A coiled-coil region spans residues 25–99 (MEYVERRLAL…REVDYLETQN (75 aa)). The Olfactomedin-like domain occupies 132 to 388 (DCSDTIASVR…QIIYRMEMKK (257 aa)). Cysteines 133 and 315 form a disulfide. Residues N175 and N235 are each glycosylated (N-linked (GlcNAc...) asparagine).

Belongs to the OLFML3 family.

Its subcellular location is the secreted. In terms of biological role, secreted scaffold protein that plays an essential role in dorsoventral patterning during early development. Stabilizes axial formation by restricting chordin (CHRD) activity on the dorsal side. Acts by facilitating the association between the tolloid proteases and their substrate chordin (CHRD), leading to enhance chordin (CHRD) degradation. The polypeptide is Olfactomedin-like protein 3 (OLFML3) (Gallus gallus (Chicken)).